Consider the following 673-residue polypeptide: DNA ligase (673 aa).

NAD(+)-binding positions include 32 to 36 (DAEYD), 81 to 82 (SL), and glutamate 113. The active-site N6-AMP-lysine intermediate is the lysine 115. NAD(+) contacts are provided by arginine 136, glutamate 173, lysine 290, and lysine 314. Residues cysteine 408, cysteine 411, cysteine 426, and cysteine 432 each contribute to the Zn(2+) site. The region spanning 595–673 (EIDSPFAGKT…EAEMIRLLGA (79 aa)) is the BRCT domain.

It belongs to the NAD-dependent DNA ligase family. LigA subfamily. It depends on Mg(2+) as a cofactor. Requires Mn(2+) as cofactor.

The catalysed reaction is NAD(+) + (deoxyribonucleotide)n-3'-hydroxyl + 5'-phospho-(deoxyribonucleotide)m = (deoxyribonucleotide)n+m + AMP + beta-nicotinamide D-nucleotide.. Its function is as follows. DNA ligase that catalyzes the formation of phosphodiester linkages between 5'-phosphoryl and 3'-hydroxyl groups in double-stranded DNA using NAD as a coenzyme and as the energy source for the reaction. It is essential for DNA replication and repair of damaged DNA. This is DNA ligase from Serratia proteamaculans (strain 568).